The following is a 434-amino-acid chain: Ribosomal protein uS12 methylthiotransferase RimO (434 aa).

An MTTase N-terminal domain is found at 1 to 107 (MHLGCEKNLV…ILNVLQRIEQ (107 aa)). Cysteine 5, cysteine 41, cysteine 70, cysteine 145, cysteine 149, and cysteine 152 together coordinate [4Fe-4S] cluster. The Radical SAM core domain maps to 131–360 (TTGKAVAYLK…ISIQQPIAEL (230 aa)). One can recognise a TRAM domain in the interval 363 to 434 (QNWIGRTVDV…DLYDLTGQVV (72 aa)).

This sequence belongs to the methylthiotransferase family. RimO subfamily. [4Fe-4S] cluster is required as a cofactor.

It localises to the cytoplasm. It catalyses the reaction L-aspartate(89)-[ribosomal protein uS12]-hydrogen + (sulfur carrier)-SH + AH2 + 2 S-adenosyl-L-methionine = 3-methylsulfanyl-L-aspartate(89)-[ribosomal protein uS12]-hydrogen + (sulfur carrier)-H + 5'-deoxyadenosine + L-methionine + A + S-adenosyl-L-homocysteine + 2 H(+). Its function is as follows. Catalyzes the methylthiolation of an aspartic acid residue of ribosomal protein uS12. In Prochlorococcus marinus (strain SARG / CCMP1375 / SS120), this protein is Ribosomal protein uS12 methylthiotransferase RimO.